The primary structure comprises 145 residues: uncharacterized protein (145 aa).

The disordered stretch occupies residues 95–119 (YVDSTSRTPSAKKDMQGLSVSEKQT).

This is an uncharacterized protein from Treponema pallidum (strain Nichols).